The chain runs to 341 residues: Ribonucleoside-diphosphate reductase small chain A (341 aa).

A disordered region spans residues 1-20; it reads MGSLKEGQGRDMEEGESEEP. Residues Asp87, Glu118, and His121 each contribute to the Fe cation site. Residue Tyr125 is part of the active site. Positions 180, 214, and 217 each coordinate Fe cation.

The protein belongs to the ribonucleoside diphosphate reductase small chain family. Homodimer and heterodimer with TSO2. Heterotetramer of two R1 and two R2 chains. A radical transfer pathway may occur between Tyr-125 of protein R2 and R1. Homodimer contains a dinuclear non-heme iron center and a stable tyrosyl radical essential for activity. A transfer pathway may occur between Tyr-125 of protein R2 and R1. Interacts with CSN7. The cofactor is Fe cation. In terms of tissue distribution, expressed in rosette leaves, cauline leaves, stems and flowers.

The protein localises to the cytoplasm. It carries out the reaction a 2'-deoxyribonucleoside 5'-diphosphate + [thioredoxin]-disulfide + H2O = a ribonucleoside 5'-diphosphate + [thioredoxin]-dithiol. With respect to regulation, inhibited by phenol, paracetamol, 2,4,6-trimethylphenol, resveratrol, furfuryl mercaptan, 2-thiophenthiol, phenylhydrazine, and hydroxyurea. Provides the precursors necessary for DNA synthesis. Catalyzes the biosynthesis of deoxyribonucleotides from the corresponding ribonucleotides. This Arabidopsis thaliana (Mouse-ear cress) protein is Ribonucleoside-diphosphate reductase small chain A (RNR2A).